A 267-amino-acid polypeptide reads, in one-letter code: Glucosamine-6-phosphate deaminase (267 aa).

D72 functions as the Proton acceptor; for enolization step in the catalytic mechanism. The active-site For ring-opening step is the D141. Residue H143 is the Proton acceptor; for ring-opening step of the active site. The For ring-opening step role is filled by E148.

The protein belongs to the glucosamine/galactosamine-6-phosphate isomerase family. NagB subfamily. Homohexamer.

The enzyme catalyses alpha-D-glucosamine 6-phosphate + H2O = beta-D-fructose 6-phosphate + NH4(+). It participates in amino-sugar metabolism; N-acetylneuraminate degradation; D-fructose 6-phosphate from N-acetylneuraminate: step 5/5. With respect to regulation, allosterically activated by N-acetylglucosamine 6-phosphate (GlcNAc6P). Catalyzes the reversible isomerization-deamination of glucosamine 6-phosphate (GlcN6P) to form fructose 6-phosphate (Fru6P) and ammonium ion. In Actinobacillus pleuropneumoniae serotype 3 (strain JL03), this protein is Glucosamine-6-phosphate deaminase.